A 286-amino-acid polypeptide reads, in one-letter code: Digeranylgeranylglyceryl phosphate synthase (286 aa).

8 helical membrane-spanning segments follow: residues 21-41 (AVAA…FAVT), 42-62 (TAHV…GNAI), 96-116 (FLFV…IVLA), 133-155 (LPGV…GAAA), 162-181 (FGVV…REII), 214-234 (VLLV…FGIW), 235-255 (YLTL…QAPD), and 266-286 (RGMF…VAGI).

Belongs to the UbiA prenyltransferase family. DGGGP synthase subfamily. Mg(2+) is required as a cofactor.

It is found in the cell membrane. The catalysed reaction is sn-3-O-(geranylgeranyl)glycerol 1-phosphate + (2E,6E,10E)-geranylgeranyl diphosphate = 2,3-bis-O-(geranylgeranyl)-sn-glycerol 1-phosphate + diphosphate. It participates in membrane lipid metabolism; glycerophospholipid metabolism. Prenyltransferase that catalyzes the transfer of the geranylgeranyl moiety of geranylgeranyl diphosphate (GGPP) to the C2 hydroxyl of (S)-3-O-geranylgeranylglyceryl phosphate (GGGP). This reaction is the second ether-bond-formation step in the biosynthesis of archaeal membrane lipids. The protein is Digeranylgeranylglyceryl phosphate synthase of Haloquadratum walsbyi (strain DSM 16790 / HBSQ001).